A 256-amino-acid chain; its full sequence is uncharacterized protein (256 aa).

The S4 RNA-binding domain maps to 16-83; the sequence is VRLQKILSRA…DSLVYLALNK (68 aa). D121 serves as the catalytic Nucleophile.

Belongs to the pseudouridine synthase RsuA family.

The catalysed reaction is a uridine in RNA = a pseudouridine in RNA. This is an uncharacterized protein from Mycobacterium leprae (strain TN).